The primary structure comprises 377 residues: MEALLLGVGLLLGAYVLVYYNLVKAPPCRGLASLRGRTAVVTGANSGIGKMTALELARRGARVVLACRSRERGEAAAFDLRQESGNNEVIFMALDLASLASVRAFATAFLSSEPRLDILIHNAGISSCGRTREPFNLLLRVNHIGPFLLTHLLLPRLKTSAPSRVVVVSSAAHRRGRLDFTRLDHPVVGWQQELRAYANSKLANVLFARELATQLEGTGVTCYAAHPGPVNSELFLRHVPGWLRPLLRPLAWLVLRAPRGGAQTPLYCALQEGIEPLSGRYFANCHVEEVPPAARDDRAAHRLWEASRKLAGLGPGEDAESDEDSQPEDPGTPSSPSSPHPEEPTVSELYPSPQSSTDRSTVTCRIPVKAELEPQAC.

The signal sequence occupies residues 1-25 (MEALLLGVGLLLGAYVLVYYNLVKA). NAD(+) contacts are provided by Ser-46 and Ile-48. Ser-170 provides a ligand contact to substrate. NAD(+)-binding residues include Tyr-197, Lys-201, and Ser-232. The active-site Proton acceptor is Tyr-197. The tract at residues 310–363 (LAGLGPGEDAESDEDSQPEDPGTPSSPSSPHPEEPTVSELYPSPQSSTDRSTVT) is disordered. The segment covering 317–327 (EDAESDEDSQP) has biased composition (acidic residues). Residues 328 to 337 (EDPGTPSSPS) show a composition bias toward low complexity. A compositionally biased stretch (polar residues) spans 352 to 363 (SPQSSTDRSTVT).

This sequence belongs to the short-chain dehydrogenases/reductases (SDR) family.

It is found in the secreted. Functionally, putative oxidoreductase. In Bos taurus (Bovine), this protein is Dehydrogenase/reductase SDR family member 13 (DHRS13).